The sequence spans 421 residues: Fumarylacetoacetase (421 aa).

Aspartate 131 is a Ca(2+) binding site. Histidine 138 (proton acceptor) is an active-site residue. Arginine 147 contributes to the substrate binding site. Residues glutamate 204, glutamate 206, and aspartate 238 each coordinate Ca(2+). Aspartate 238 lines the Mg(2+) pocket. The substrate site is built by glutamine 245 and tyrosine 249. Mg(2+) is bound by residues lysine 258 and threonine 262. A substrate-binding site is contributed by threonine 355.

The protein belongs to the FAH family. Ca(2+) serves as cofactor. It depends on Mg(2+) as a cofactor.

It catalyses the reaction 4-fumarylacetoacetate + H2O = acetoacetate + fumarate + H(+). Its pathway is amino-acid degradation; L-phenylalanine degradation; acetoacetate and fumarate from L-phenylalanine: step 6/6. Its function is as follows. Converts fumarylacetoacetate to acetoacetate and fumarate. Involved in tyrosine catabolic pathway. Catalyzes the final step in the tyrosine degradation pathway. The sequence is that of Fumarylacetoacetase from Arabidopsis thaliana (Mouse-ear cress).